A 424-amino-acid polypeptide reads, in one-letter code: Tubulin gamma chain, nucleomorph (424 aa).

137-143 (NGGTGAG) contributes to the GTP binding site.

This sequence belongs to the tubulin family.

In terms of biological role, tubulin is the major constituent of microtubules. The gamma chain is found at microtubule organizing centers (MTOC) such as the spindle poles or the centrosome, suggesting that it is involved in the minus-end nucleation of microtubule assembly. The chain is Tubulin gamma chain, nucleomorph (tubG) from Guillardia theta (Cryptophyte).